The chain runs to 645 residues: Cytoplasmic dynein 1 intermediate chain 1 (645 aa).

Composition is skewed to basic and acidic residues over residues 1 to 13 (MSDKSDLKAELER) and 20 to 58 (QIREEKKRKEEERKKKEADMQQKKEPVQDDSDLDRKRRE). Disordered regions lie at residues 1–58 (MSDK…KRRE) and 96–125 (MSPSSKSVSTPSEAGSQDSGDLGPLTRTLQ). Residue Ser-2 is modified to N-acetylserine. Positions 2 to 123 (SDKSDLKAEL…SGDLGPLTRT (122 aa)) are interaction with DCTN1. Phosphoserine occurs at positions 50 and 100. The span at 96-107 (MSPSSKSVSTPS) shows a compositional bias: low complexity. Thr-105 carries the post-translational modification Phosphothreonine. Phosphoserine is present on residues Ser-107, Ser-111, and Ser-114. The segment at 147 to 163 (KLGVSKVTQVDFLPREV) is interaction with DYNLT1. Residues 169-221 (ETQTPLATHQSEEDEEDEEMVESKVGQDSELENQDKKQEVKEAPPRELTEEEK) form a disordered region. Thr-176 carries the phosphothreonine modification. Ser-179 and Ser-197 each carry phosphoserine. The span at 189-221 (VESKVGQDSELENQDKKQEVKEAPPRELTEEEK) shows a compositional bias: basic and acidic residues. WD repeat units lie at residues 285-334 (SKHR…TTPE), 338-378 (HCQS…RTPV), 387-428 (AHTH…TPQE), 437-477 (SKPV…AGIG), 482-527 (GHQG…PLYS), 530-570 (DNAD…EVPT), and 576-615 (EGASALNRVRWAQAGKEVAVGDSEGRIWVYDVGELAVPHN). Ser-635 is subject to Phosphoserine.

The protein belongs to the dynein intermediate chain family. As to quaternary structure, homodimer. The cytoplasmic dynein 1 complex consists of two catalytic heavy chains (HCs) and a number of non-catalytic subunits presented by intermediate chains (ICs), light intermediate chains (LICs) and light chains (LCs); the composition seems to vary in respect to the IC, LIC and LC composition. The heavy chain homodimer serves as a scaffold for the probable homodimeric assembly of the respective non-catalytic subunits. The ICs and LICs bind directly to the HC dimer and the LCs assemble on the IC dimer. Interacts with DYNC1H1. Interacts with DYNLT1 and DYNLT3. Interacts with DCTN1. Interacts with MCRS1; the interaction is required for the proper distribution of centriolar satellites.

It is found in the cytoplasm. Its subcellular location is the chromosome. The protein resides in the centromere. The protein localises to the kinetochore. It localises to the cytoskeleton. It is found in the spindle pole. Acts as one of several non-catalytic accessory components of the cytoplasmic dynein 1 complex that are thought to be involved in linking dynein to cargos and to adapter proteins that regulate dynein function. Cytoplasmic dynein 1 acts as a motor for the intracellular retrograde motility of vesicles and organelles along microtubules. The intermediate chains mediate the binding of dynein to dynactin via its 150 kDa component (p150-glued) DCTN1. May play a role in mediating the interaction of cytoplasmic dynein with membranous organelles and kinetochores. The chain is Cytoplasmic dynein 1 intermediate chain 1 (DYNC1I1) from Homo sapiens (Human).